A 265-amino-acid chain; its full sequence is MQPDLHCRTLAAHTLKHFRALSPLTHCMTNDVVQTFTANTLLALGASPAMVIDPAEARPFAAIANALLVNVGTLTASRADAMRAAVESAYDAKTPWTLDPVAVGALEFRRRFCLDLLSLRPAAIRGNASEILALAGMALGGRGVDTTEAALAALPAAQALARQIDCIVVVTGEIDYVTNGQRTLSIPGGDPLMTRIVGTGCALSAVVAASCALPGAALDNVASACCWMKLAGQAAAERSEGPGSFIPAFLDALYHLDVEAANATN.

A substrate-binding site is contributed by M50. ATP is bound by residues R125 and T171. G198 contacts substrate.

The protein belongs to the Thz kinase family. Mg(2+) is required as a cofactor.

The enzyme catalyses 5-(2-hydroxyethyl)-4-methylthiazole + ATP = 4-methyl-5-(2-phosphooxyethyl)-thiazole + ADP + H(+). It functions in the pathway cofactor biosynthesis; thiamine diphosphate biosynthesis; 4-methyl-5-(2-phosphoethyl)-thiazole from 5-(2-hydroxyethyl)-4-methylthiazole: step 1/1. Functionally, catalyzes the phosphorylation of the hydroxyl group of 4-methyl-5-beta-hydroxyethylthiazole (THZ). The protein is Hydroxyethylthiazole kinase of Salmonella arizonae (strain ATCC BAA-731 / CDC346-86 / RSK2980).